The following is a 438-amino-acid chain: tRNA modification GTPase MnmE (438 aa).

Residues Arg-20, Glu-76, and Lys-115 each coordinate (6S)-5-formyl-5,6,7,8-tetrahydrofolate. A TrmE-type G domain is found at 210–370 (NFTIMILGRR…LKCFINKIVD (161 aa)). Position 220 (Asn-220) interacts with K(+). Residues 220–225 (NVGKST), 239–245 (TNIPGTT), and 264–267 (DTAG) each bind GTP. Ser-224 is a Mg(2+) binding site. Positions 239, 241, and 244 each coordinate K(+). Thr-245 is a Mg(2+) binding site. A (6S)-5-formyl-5,6,7,8-tetrahydrofolate-binding site is contributed by Lys-438.

The protein belongs to the TRAFAC class TrmE-Era-EngA-EngB-Septin-like GTPase superfamily. TrmE GTPase family. In terms of assembly, homodimer. Heterotetramer of two MnmE and two MnmG subunits. K(+) is required as a cofactor.

The protein localises to the cytoplasm. Functionally, exhibits a very high intrinsic GTPase hydrolysis rate. Involved in the addition of a carboxymethylaminomethyl (cmnm) group at the wobble position (U34) of certain tRNAs, forming tRNA-cmnm(5)s(2)U34. The protein is tRNA modification GTPase MnmE of Carsonella ruddii (strain PV).